A 60-amino-acid polypeptide reads, in one-letter code: Large ribosomal subunit protein bL32 (60 aa).

This sequence belongs to the bacterial ribosomal protein bL32 family.

The chain is Large ribosomal subunit protein bL32 from Paramagnetospirillum magneticum (strain ATCC 700264 / AMB-1) (Magnetospirillum magneticum).